Consider the following 473-residue polypeptide: Putative sulfoquinovose importer (473 aa).

11 helical membrane passes run 18-38 (AYGVGDFGSNLMLCIGTLYLL), 45-65 (LGMPAYYGGIIFLVAKFFTAF), 88-108 (PFILYASFPVALVATAQFFAT), 110-130 (FTLPVKTAFATVLFMLFGLFY), 160-180 (GGATIGLLLCTVGFMPIQALF), 187-207 (GYLIAAVIFSVCGLFSMWWCF), 239-259 (LLVLCVANLCTLAAFNIKLAI), 276-296 (WMGFFSMGCILIGVLLVPAAV), 317-337 (ILNFIWGGTSFLFVIFSCIAF), 380-400 (ISAALAGFLPGIMLTQIGYIP), and 415-435 (LIFLWPCGLAIIAALTMGFFY).

Belongs to the sodium:galactoside symporter (TC 2.A.2) family.

It localises to the cell inner membrane. Could be involved in sulfoquinovose import. This Salmonella typhimurium (strain LT2 / SGSC1412 / ATCC 700720) protein is Putative sulfoquinovose importer (yihO).